The following is a 200-amino-acid chain: Nascent polypeptide-associated complex subunit alpha (200 aa).

Positions 1-19 are enriched in basic and acidic residues; it reads MADPRVEELPEEEVKKTQV. 2 disordered regions span residues 1-54 and 118-165; these read MADP…NEKK and AAQQ…EDKD. Positions 20–34 are enriched in acidic residues; it reads EDLDNSSDDESDIEA. The NAC-A/B domain occupies 49–114; it reads SRNEKKARKA…AKIEDLNASA (66 aa). Basic and acidic residues predominate over residues 127–146; it reads AEHDHAGHTHEHEEAGKAKE. Residues 147–160 are compositionally biased toward acidic residues; it reads EEEEDEGEEVDAEG. Residues 161-200 enclose the UBA domain; the sequence is IEDKDIELVMTQANVSRKKAIKALKENDNDIVNSIMALSI.

This sequence belongs to the NAC-alpha family. As to quaternary structure, part of the nascent polypeptide-associated complex (NAC), consisting of npc-1/egd2 and npc-2/egd1. NAC associates with ribosomes via npc-2/egd1.

Its subcellular location is the cytoplasm. The protein localises to the nucleus. In terms of biological role, component of the nascent polypeptide-associated complex (NAC), a dynamic component of the ribosomal exit tunnel, protecting the emerging polypeptides from interaction with other cytoplasmic proteins to ensure appropriate nascent protein targeting. The NAC complex also promotes mitochondrial protein import by enhancing productive ribosome interactions with the outer mitochondrial membrane and blocks the inappropriate interaction of ribosomes translating non-secretory nascent polypeptides with translocation sites in the membrane of the endoplasmic reticulum. Npc-1/egd2 may also be involved in transcription regulation. This chain is Nascent polypeptide-associated complex subunit alpha (npc-1), found in Neurospora crassa (strain ATCC 24698 / 74-OR23-1A / CBS 708.71 / DSM 1257 / FGSC 987).